The primary structure comprises 447 residues: N-succinylarginine dihydrolase (447 aa).

Residues 19–28, Asn-110, and 137–138 contribute to the substrate site; these read AGLSFGNEAS and HR. Glu-174 is an active-site residue. Arg-212 contributes to the substrate binding site. His-248 is a catalytic residue. Residues Asp-250 and Asn-359 each contribute to the substrate site. Cys-365 serves as the catalytic Nucleophile.

It belongs to the succinylarginine dihydrolase family. As to quaternary structure, homodimer.

The catalysed reaction is N(2)-succinyl-L-arginine + 2 H2O + 2 H(+) = N(2)-succinyl-L-ornithine + 2 NH4(+) + CO2. It functions in the pathway amino-acid degradation; L-arginine degradation via AST pathway; L-glutamate and succinate from L-arginine: step 2/5. In terms of biological role, catalyzes the hydrolysis of N(2)-succinylarginine into N(2)-succinylornithine, ammonia and CO(2). The protein is N-succinylarginine dihydrolase of Salmonella enteritidis PT4 (strain P125109).